The primary structure comprises 397 residues: Penicillopepsin-1 (397 aa).

The signal sequence occupies residues 1-20 (MVVFSQVTVALTCFSAIASA). A propeptide spans 21–71 (AAVRQEPPQGFTVNQVQKAVPGTRTVNLPGLYANALVKYGATVPATVHAAA) (activation peptide). The Peptidase A1 domain maps to 87–394 (YLTPVTIGSS…DSEGPRLGFA (308 aa)). Catalysis depends on residues D103 and D285. A glycan (N-linked (GlcNAc...) asparagine) is linked at N311. A disulfide bond links C322 and C357.

This sequence belongs to the peptidase A1 family. In terms of assembly, monomer.

Its subcellular location is the secreted. The enzyme catalyses Hydrolysis of proteins with broad specificity similar to that of pepsin A, preferring hydrophobic residues at P1 and P1', but also cleaving 20-Gly-|-Glu-21 in the B chain of insulin. Clots milk, and activates trypsinogen.. Its function is as follows. Secreted aspartic endopeptidase that allows assimilation of proteinaceous substrates. The scissile peptide bond is attacked by a nucleophilic water molecule activated by two aspartic residues in the active site. Shows a broad primary substrate specificity. Favors hydrophobic residues at the P1 and P1' positions, but can also activate trypsinogen and hydrolyze the B chain of insulin between positions 'Gly-20' and 'Glu-21'. The polypeptide is Penicillopepsin-1 (Penicillium roqueforti).